The following is a 50-amino-acid chain: Sperm protamine P1 (50 aa).

2 cysteine pairs are disulfide-bonded: Cys-7-Cys-15 and Cys-39-Cys-47.

It belongs to the protamine P1 family. Cross-linked by interchain disulfide bonds around the DNA-helix. As to expression, testis.

Its subcellular location is the nucleus. It is found in the chromosome. Functionally, protamines substitute for histones in the chromatin of sperm during the haploid phase of spermatogenesis. They compact sperm DNA into a highly condensed, stable and inactive complex. This Oryctolagus cuniculus (Rabbit) protein is Sperm protamine P1 (PRM1).